Reading from the N-terminus, the 320-residue chain is Peptidase 1 (320 aa).

An N-terminal signal peptide occupies residues 1-18; sequence MKIVLAIASLLALSAVYA. A propeptide spans 19-98 (activation peptide); sequence RPSSIKTFEE…LKTQFDLNAE (80 aa). Disulfide bonds link C102–C215, C129–C169, and C163–C201. Residue C132 is part of the active site. The N-linked (GlcNAc...) asparagine glycan is linked to N150. Active-site residues include H268 and N288.

It belongs to the peptidase C1 family. In terms of processing, N-glycosylated. N-glycanase treatment does not completely remove carbohydrates, suggesting that the protein contains additional glycosylation sites.

It localises to the secreted. The catalysed reaction is Broad endopeptidase specificity.. In terms of biological role, thiol protease, with a preference for substrates with a large hydrophobic side chain in the P2 position, or with basic residues. In Dermatophagoides pteronyssinus (European house dust mite), this protein is Peptidase 1 (DERP1).